A 244-amino-acid chain; its full sequence is Lipoprotein-releasing system ATP-binding protein LolD (244 aa).

An ABC transporter domain is found at 19-244 (IRAEALAKTY…KLRELAPSAV (226 aa)). 55 to 62 (GASGAGKS) serves as a coordination point for ATP.

Belongs to the ABC transporter superfamily. Lipoprotein translocase (TC 3.A.1.125) family. The complex is composed of two ATP-binding proteins (LolD) and two transmembrane proteins (LolC and LolE).

It is found in the cell inner membrane. Functionally, part of the ABC transporter complex LolCDE involved in the translocation of mature outer membrane-directed lipoproteins, from the inner membrane to the periplasmic chaperone, LolA. Responsible for the formation of the LolA-lipoprotein complex in an ATP-dependent manner. The protein is Lipoprotein-releasing system ATP-binding protein LolD of Xanthomonas axonopodis pv. citri (strain 306).